The sequence spans 652 residues: tRNA 5-methylaminomethyl-2-thiouridine biosynthesis bifunctional protein MnmC (652 aa).

The segment at 1 to 235 (MPDRLVPATL…EPALRVGEYA (235 aa)) is tRNA (mnm(5)s(2)U34)-methyltransferase. The interval 259 to 652 (IGAGLAGCAV…IRALRGRQIG (394 aa)) is FAD-dependent cmnm(5)s(2)U34 oxidoreductase.

The protein in the N-terminal section; belongs to the methyltransferase superfamily. tRNA (mnm(5)s(2)U34)-methyltransferase family. It in the C-terminal section; belongs to the DAO family. FAD serves as cofactor.

Its subcellular location is the cytoplasm. The catalysed reaction is 5-aminomethyl-2-thiouridine(34) in tRNA + S-adenosyl-L-methionine = 5-methylaminomethyl-2-thiouridine(34) in tRNA + S-adenosyl-L-homocysteine + H(+). Catalyzes the last two steps in the biosynthesis of 5-methylaminomethyl-2-thiouridine (mnm(5)s(2)U) at the wobble position (U34) in tRNA. Catalyzes the FAD-dependent demodification of cmnm(5)s(2)U34 to nm(5)s(2)U34, followed by the transfer of a methyl group from S-adenosyl-L-methionine to nm(5)s(2)U34, to form mnm(5)s(2)U34. In Burkholderia ambifaria (strain ATCC BAA-244 / DSM 16087 / CCUG 44356 / LMG 19182 / AMMD) (Burkholderia cepacia (strain AMMD)), this protein is tRNA 5-methylaminomethyl-2-thiouridine biosynthesis bifunctional protein MnmC.